The primary structure comprises 154 residues: Endoribonuclease YbeY (154 aa).

3 residues coordinate Zn(2+): H118, H122, and H128.

It belongs to the endoribonuclease YbeY family. Requires Zn(2+) as cofactor.

It is found in the cytoplasm. Its function is as follows. Single strand-specific metallo-endoribonuclease involved in late-stage 70S ribosome quality control and in maturation of the 3' terminus of the 16S rRNA. In Macrococcus caseolyticus (strain JCSC5402) (Macrococcoides caseolyticum), this protein is Endoribonuclease YbeY.